The following is a 794-amino-acid chain: Lon protease (794 aa).

Positions 13–204 (VPLYPLREII…KVYMHLTNEV (192 aa)) constitute a Lon N-terminal domain. 356–363 (GPPGVGKT) is a binding site for ATP. The region spanning 592–773 (KDRVGVATGL…REVFVQALNP (182 aa)) is the Lon proteolytic domain. Active-site residues include S679 and K722. Residues 774–788 (TSPAPTAATSARTPA) show a composition bias toward low complexity. Residues 774-794 (TSPAPTAATSARTPAGAPPPQ) form a disordered region.

The protein belongs to the peptidase S16 family. As to quaternary structure, homohexamer. Organized in a ring with a central cavity.

The protein resides in the cytoplasm. The catalysed reaction is Hydrolysis of proteins in presence of ATP.. ATP-dependent serine protease that mediates the selective degradation of mutant and abnormal proteins as well as certain short-lived regulatory proteins. Required for cellular homeostasis and for survival from DNA damage and developmental changes induced by stress. Degrades polypeptides processively to yield small peptide fragments that are 5 to 10 amino acids long. Binds to DNA in a double-stranded, site-specific manner. The protein is Lon protease of Citrifermentans bemidjiense (strain ATCC BAA-1014 / DSM 16622 / JCM 12645 / Bem) (Geobacter bemidjiensis).